Here is a 158-residue protein sequence, read N- to C-terminus: Cell number regulator 11 (158 aa).

The next 2 helical transmembrane spans lie at 49-67 (FGDLHTCCLTLWCPCVTFG) and 78-94 (TCCMSGTLYYLLSTIGW).

This sequence belongs to the cornifelin family.

The protein resides in the membrane. The chain is Cell number regulator 11 (CNR11) from Zea mays (Maize).